A 285-amino-acid chain; its full sequence is Type II secretion system protein C (285 aa).

Residues 1 to 27 (MSKGIKMHNSVMRLTIPNKKIINYAPH) are Cytoplasmic-facing. Residues 28–46 (IVTSIILFFICQQLAQLTW) form a helical membrane-spanning segment. At 47 to 285 (KIILPVNFTD…NDIYLALRDE (239 aa)) the chain is on the periplasmic side.

It belongs to the GSP C family.

The protein localises to the cell inner membrane. In terms of biological role, involved in a type II secretion system (T2SS, formerly general secretion pathway, GSP) for the export of proteins. Required for the translocation of pullulanase. This is Type II secretion system protein C (pulC) from Klebsiella pneumoniae.